A 232-amino-acid chain; its full sequence is Protein INAPERTURATE POLLEN 1 homolog (232 aa).

In terms of assembly, interacts with LECRKS7/DAF1.

It is found in the cytoplasm. In terms of biological role, required for pollen aperture formation, male fertility and LECRKS7/DAF1 function. Seems to be involved in operculum protrusion. Participates in the modification of plasma membrane at future aperture sites, possibly by creating close contact between the plasma membrane and callose wall to prevent primexine formation and sporopollenin deposition. The sequence is that of Protein INAPERTURATE POLLEN 1 homolog from Oryza sativa subsp. japonica (Rice).